The following is a 54-amino-acid chain: Large ribosomal subunit protein bL33 (54 aa).

The protein belongs to the bacterial ribosomal protein bL33 family.

The chain is Large ribosomal subunit protein bL33 from Opitutus terrae (strain DSM 11246 / JCM 15787 / PB90-1).